A 262-amino-acid polypeptide reads, in one-letter code: ATP synthase subunit a (262 aa).

Transmembrane regions (helical) follow at residues 32-52, 98-118, 127-147, 153-173, 189-209, and 219-239; these read IAFT…AVFV, LFMF…VLGI, FTIT…VGFW, FFSL…IFPI, LFVA…FVID, and LLVG…EILV.

The protein belongs to the ATPase A chain family. In terms of assembly, F-type ATPases have 2 components, CF(1) - the catalytic core - and CF(0) - the membrane proton channel. CF(1) has five subunits: alpha(3), beta(3), gamma(1), delta(1), epsilon(1). CF(0) has four main subunits: a, b, b' and c.

It localises to the cell inner membrane. Functionally, key component of the proton channel; it plays a direct role in the translocation of protons across the membrane. The polypeptide is ATP synthase subunit a (Erythrobacter litoralis (strain HTCC2594)).